A 75-amino-acid polypeptide reads, in one-letter code: Small ribosomal subunit protein bS18 (75 aa).

This sequence belongs to the bacterial ribosomal protein bS18 family. Part of the 30S ribosomal subunit. Forms a tight heterodimer with protein bS6.

Functionally, binds as a heterodimer with protein bS6 to the central domain of the 16S rRNA, where it helps stabilize the platform of the 30S subunit. The polypeptide is Small ribosomal subunit protein bS18 (Dinoroseobacter shibae (strain DSM 16493 / NCIMB 14021 / DFL 12)).